The primary structure comprises 250 residues: MNREQAGKALVLIPARMASTRLPGKPLADICGLPMIVQVARRAAEAEVGRIVVAVDHPEVFAAVSDAGFEAIMTRVDHQSGSDRIHEALLKADPQGEAEIVINVQGDLPTIEPGPIRAALKPLENPSTDIATLTVAITDEHEKTNPNVVKVVGSPLSQSRFRALYFTRATAPYGEGPLYHHIGLYAYRRRALETFVSLKPSALEKRESLEQLRALEAGMRIDVEIVDSVPLGVDTPADLDKARRILSARA.

Belongs to the KdsB family.

The protein resides in the cytoplasm. The catalysed reaction is 3-deoxy-alpha-D-manno-oct-2-ulosonate + CTP = CMP-3-deoxy-beta-D-manno-octulosonate + diphosphate. The protein operates within nucleotide-sugar biosynthesis; CMP-3-deoxy-D-manno-octulosonate biosynthesis; CMP-3-deoxy-D-manno-octulosonate from 3-deoxy-D-manno-octulosonate and CTP: step 1/1. It participates in bacterial outer membrane biogenesis; lipopolysaccharide biosynthesis. Its function is as follows. Activates KDO (a required 8-carbon sugar) for incorporation into bacterial lipopolysaccharide in Gram-negative bacteria. The chain is 3-deoxy-manno-octulosonate cytidylyltransferase from Sinorhizobium medicae (strain WSM419) (Ensifer medicae).